The primary structure comprises 122 residues: Small ribosomal subunit protein uS13 (122 aa).

Residues 97–122 (PCRGQRTKTNARTRKGPARTVAGKKK) form a disordered region.

The protein belongs to the universal ribosomal protein uS13 family. In terms of assembly, part of the 30S ribosomal subunit. Forms a loose heterodimer with protein S19. Forms two bridges to the 50S subunit in the 70S ribosome.

Functionally, located at the top of the head of the 30S subunit, it contacts several helices of the 16S rRNA. In the 70S ribosome it contacts the 23S rRNA (bridge B1a) and protein L5 of the 50S subunit (bridge B1b), connecting the 2 subunits; these bridges are implicated in subunit movement. Contacts the tRNAs in the A and P-sites. This chain is Small ribosomal subunit protein uS13, found in Geobacter sp. (strain M21).